We begin with the raw amino-acid sequence, 652 residues long: DNA ligase (652 aa).

Residues 29-33, 78-79, and Glu-107 contribute to the NAD(+) site; these read DSDYD and SL. Lys-109 (N6-AMP-lysine intermediate) is an active-site residue. Residues Arg-130, Glu-164, Lys-278, and Lys-302 each coordinate NAD(+). Positions 395, 398, 413, and 418 each coordinate Zn(2+). A BRCT domain is found at 577–652; it reads NSDAALFGLT…IEDEDWLRKF (76 aa).

The protein belongs to the NAD-dependent DNA ligase family. LigA subfamily. Requires Mg(2+) as cofactor. The cofactor is Mn(2+).

It carries out the reaction NAD(+) + (deoxyribonucleotide)n-3'-hydroxyl + 5'-phospho-(deoxyribonucleotide)m = (deoxyribonucleotide)n+m + AMP + beta-nicotinamide D-nucleotide.. Its function is as follows. DNA ligase that catalyzes the formation of phosphodiester linkages between 5'-phosphoryl and 3'-hydroxyl groups in double-stranded DNA using NAD as a coenzyme and as the energy source for the reaction. It is essential for DNA replication and repair of damaged DNA. This chain is DNA ligase, found in Streptococcus pyogenes serotype M6 (strain ATCC BAA-946 / MGAS10394).